A 93-amino-acid chain; its full sequence is Acylphosphatase (93 aa).

The Acylphosphatase-like domain occupies 6 to 93 (RAHVFISGRV…GEERGFSIIW (88 aa)). Active-site residues include Arg21 and Asn39.

This sequence belongs to the acylphosphatase family.

It catalyses the reaction an acyl phosphate + H2O = a carboxylate + phosphate + H(+). This Roseiflexus sp. (strain RS-1) protein is Acylphosphatase (acyP).